The sequence spans 78 residues: Acyl carrier protein (78 aa).

Residues 2–77 enclose the Carrier domain; the sequence is STIEERVKKI…EAIDYVTAHA (76 aa). At Ser-37 the chain carries O-(pantetheine 4'-phosphoryl)serine.

Belongs to the acyl carrier protein (ACP) family. 4'-phosphopantetheine is transferred from CoA to a specific serine of apo-ACP by AcpS. This modification is essential for activity because fatty acids are bound in thioester linkage to the sulfhydryl of the prosthetic group.

The protein localises to the cytoplasm. Its pathway is lipid metabolism; fatty acid biosynthesis. In terms of biological role, carrier of the growing fatty acid chain in fatty acid biosynthesis. This is Acyl carrier protein from Ectopseudomonas mendocina (strain ymp) (Pseudomonas mendocina).